The chain runs to 164 residues: Peptide deformylase-like (164 aa).

Residue Glu134 is part of the active site.

Belongs to the polypeptide deformylase family.

This chain is Peptide deformylase-like, found in Brucella melitensis biotype 1 (strain ATCC 23456 / CCUG 17765 / NCTC 10094 / 16M).